We begin with the raw amino-acid sequence, 303 residues long: N-acetyl-D-glucosamine kinase (303 aa).

ATP contacts are provided by residues 4 to 11 (GFDIGGTK) and 133 to 140 (GVGGGLVL). Zn(2+) contacts are provided by His-157, Cys-177, Cys-179, and Cys-184.

It belongs to the ROK (NagC/XylR) family. NagK subfamily.

The catalysed reaction is N-acetyl-D-glucosamine + ATP = N-acetyl-D-glucosamine 6-phosphate + ADP + H(+). It functions in the pathway cell wall biogenesis; peptidoglycan recycling. In terms of biological role, catalyzes the phosphorylation of N-acetyl-D-glucosamine (GlcNAc) derived from cell-wall degradation, yielding GlcNAc-6-P. This chain is N-acetyl-D-glucosamine kinase, found in Salmonella heidelberg (strain SL476).